A 317-amino-acid polypeptide reads, in one-letter code: Cytochrome c biogenesis protein CcsA (317 aa).

Helical transmembrane passes span 17–37, 44–64, 71–91, 101–121, 143–163, 223–243, 252–272, and 284–304; these read VVSI…IVGL, GMIV…IYSG, LYES…LPYL, ITSP…LTQI, MILS…LLVI, IISI…VWAN, WDPK…YLHI, and AIVA…INIL.

Belongs to the CcmF/CycK/Ccl1/NrfE/CcsA family. In terms of assembly, may interact with Ccs1.

Its subcellular location is the plastid. The protein resides in the chloroplast thylakoid membrane. Required during biogenesis of c-type cytochromes (cytochrome c6 and cytochrome f) at the step of heme attachment. The chain is Cytochrome c biogenesis protein CcsA from Pelargonium hortorum (Common geranium).